Here is a 401-residue protein sequence, read N- to C-terminus: Multidrug resistance protein MdtH (401 aa).

Residues 1-12 (MSRVSQARNLGK) lie on the Cytoplasmic side of the membrane. The helical transmembrane segment at 13-33 (YFLLIDNMLVVLGFFVVFPLV) threads the bilayer. Residues 34–98 (SIRFVDQMGW…GFATMGIAHE (65 aa)) lie on the Periplasmic side of the membrane. The chain crosses the membrane as a helical span at residues 99–116 (PWLLWFSCLLSGLGGTLF). Residues 117–137 (DPPRSALVVKLMPQQRGRFFS) are Cytoplasmic-facing. A helical membrane pass occupies residues 138–158 (LLMMQDSAGAVIGALLGSWLL). At 159-163 (QYDFR) the chain is on the periplasmic side. A helical membrane pass occupies residues 164 to 184 (LVCATGAVLFVLCAAFNAWLL). At 185–212 (PAWKLSTIRTPVREGMTRVMRDKRFVTY) the chain is on the cytoplasmic side. The chain crosses the membrane as a helical span at residues 213–233 (VLTLAGYYMLAVQVMLMLPIM). The Periplasmic segment spans residues 234–242 (VNDVAGAPS). The helical transmembrane segment at 243 to 263 (AVKWMYAIEACLSLTLLYPIA) threads the bilayer. Topologically, residues 264 to 275 (RWSEKHFRLEHR) are cytoplasmic. Residues 276-296 (LMAGLLIMSLSMMPVGMVSGL) traverse the membrane as a helical segment. The Periplasmic portion of the chain corresponds to 297-298 (QQ). Residues 299–319 (LFTLICLFYIGSIIAEPARET) form a helical membrane-spanning segment. At 320–338 (LSASLADARARGSYMGFSR) the chain is on the cytoplasmic side. A helical membrane pass occupies residues 339–359 (LGLAIGGTIGYIGGGWLFDLG). Over 360 to 366 (KSAHQPE) the chain is Periplasmic. The chain crosses the membrane as a helical span at residues 367-387 (LPWMMLGIIGIFTFLALGWQF). At 388–401 (SQKRAARRLLERDA) the chain is on the cytoplasmic side.

Belongs to the major facilitator superfamily. DHA1 family. MdtH (TC 2.A.1.2.21) subfamily.

Its subcellular location is the cell inner membrane. The sequence is that of Multidrug resistance protein MdtH from Shigella dysenteriae serotype 1 (strain Sd197).